An 853-amino-acid polypeptide reads, in one-letter code: MKFGFIAHPTSLGLKRYVKMLDLLQRNSTEQHSGYTRELWERQNLVPFMNFARITSATGATCEGVIKYMPLVADEMLADARGIAARVVQGIEELAGDGAELVGLGGFTSIVGRRGEATAEKSPVPVTSGNSLTTYAGYKALMQIQSWLEIRPEEEPVAIVGYPGSICLALSRLLLAHGFSLHLLHRAGNHDRSELLSHLPEEYHSRVTLTSDPEDLYPRCKLFAAATSAGGVIDPARLQPGSIFIDVALPRDIASETRPARDDILIIDGGCVTATDAVKLGGESLNVTIKQQLNGCMAETIVLALENRRENFSLGRYLAPEKVLEIGEIAERHGFFAYPLASYGERIDRQSVTNLKRYYHHDIYAGESADAALPASRLAFIDAVIAQTPAREDTLDRYHQYINPMMVDFLKLQRCDNVFRSAAGTQLYDDAGEAFLDMVAGYGCLNLGHNPQPVVNALKNYLDAQGPNFIQYISIPEQTAKLAEVLCRLAPGNMGRVFFSNSGTEAVEAAMKIAKASTGKPGIAYLRNSYHGKTLGALSITGRDKHRRYFTPLLDAMVEVPFGDLAALREALNREDVGALMIEPIQGEGGVHIPPAGYLQAVQQLCRETGVLLMVDEVQTGLGRTGKLFACEWDGIEPDVLMLSKSLSGGLIPIGATLCRADLWQKAYGTADRFLVHSSTYGGGNLASVVALSALREILAQDLVGHAERMGAYFKQALSEIAARYPFVSEVRGRGLMLGIQFDQAFTGAVNASAREFATRLPGDWHTTWKFLPDPVQAHLRAAMDRMEQALGEMFCMKFVTKLCQDHKILTFITANSSTVIRIQPPLIISKAEIDRFVGAFATVCEELSTFLD.

A pyridoxal 5'-phosphate-binding site is contributed by 503–504 (GT). Position 645 is an N6-(pyridoxal phosphate)lysine (Lys-645). Pyridoxal 5'-phosphate is bound at residue Thr-680.

Belongs to the class-III pyridoxal-phosphate-dependent aminotransferase family. Homodimer. The cofactor is pyridoxal 5'-phosphate.

The protein operates within antibiotic biosynthesis; prodigiosin biosynthesis. Functionally, involved in the biosynthesis of 2-methyl-3-n-amyl-pyrrole (MAP), one of the terminal products involved in the biosynthesis of the red antibiotic prodigiosin (Pig). Catalyzes the transamination to the aldehyde group of 3-acetyloctanal, resulting in an aminoketone, which spontaneously cyclizes to yield the dihydro form of MAP (H2MAP). This Serratia sp. (strain FS14) protein is Aminotransferase PigE.